Consider the following 390-residue polypeptide: Dynein regulatory complex subunit 5 (390 aa).

3 LRR repeats span residues 182–205, 210–233, and 238–261; these read TETLTHLDLSNNSLDDDKVRMLAS, NLSITHLNLSHNKIADRGVRALAK, and HSVISLLELHDNQIHTEGAESLAR.

It belongs to the DRC5 family. Component of the nexin-dynein regulatory complex (N-DRC). Interacts with DRC1, DRC2, DRC3, DRC4, DRC7 and DRC11.

The protein localises to the cell projection. It localises to the cilium. Its subcellular location is the flagellum. The protein resides in the cytoplasm. It is found in the cytoskeleton. The protein localises to the flagellum axoneme. Component of the nexin-dynein regulatory complex (N-DRC) a key regulator of ciliary/flagellar motility which maintains the alignment and integrity of the distal axoneme and regulates microtubule sliding in motile axonemes. May play a role in the assembly of N-DRC. The sequence is that of Dynein regulatory complex subunit 5 from Chlamydomonas reinhardtii (Chlamydomonas smithii).